The following is a 691-amino-acid chain: Inactive TPR repeat-containing thioredoxin TTL3 (691 aa).

2 disordered regions span residues 1–153 (MSHS…AVSP) and 174–209 (MASRTSSRTETLCTGTGNYGHGNVVRSGGGGGTSGK). Serine 8 carries the post-translational modification Phosphoserine. Residues 19 to 39 (RFRDLQRNDDDVNKPDFRELD) show a composition bias toward basic and acidic residues. A phosphoserine mark is found at serine 42 and serine 45. Residues 51-79 (GSASSSAAATPTSSSGSSGSASGKPSVSS) are compositionally biased toward low complexity. Residues 83–93 (KRLDDAYKSHS) show a composition bias toward basic and acidic residues. Polar residues-rich tracts occupy residues 94 to 108 (GELSSPGSGMPTTTR), 118 to 140 (SSTGTPLIFSGSSFTSATSHTSP), and 175 to 189 (ASRTSSRTETLCTGT). 8 TPR repeats span residues 220–253 (PEELKRMGNDMYRRGSFSEALSLYDRAILISPGN), 255–287 (AYRSNRAAALTALRRLGEAVKECLEAVRIDPSY), 289–321 (RAHQRLASLYLRLGEAENARRHICFSGQCPDQA), 327–362 (QTLEKHLRRCWEARKIGDWKTAIKETDAAIANGADS), 412–445 (AYVLCIQAQVDMALGRFENAVVKAERAAMLDQTN), 458–491 (VVRARTRGNELFSSGRFSEACVAYGDGLKQDDSN), 492–525 (SVLYCNRAACWYKLGLWEKSVEDCNHALKSQPSY), and 527–559 (KALLRRAASYGKLGRWEDAVKDYEFLRRELPGD). The Thioredoxin domain occupies 596 to 683 (DKFKKSVALP…MVCPSHQFLE (88 aa)).

As to quaternary structure, interacts with BRL2. As to expression, expressed in embryos and organ primordia in shoot and root. In primary and cauline leaves and petals, is expressed in hydathodes, guard cells, petiole cells and cells associated with differentiating vascular bundles.

In terms of biological role, involved in osmotic and salt stress tolerance. May play a role in the control of meristematic cell size during osmotic stress. May function as an adapter protein for BRL2 and may be required for signaling affecting leaf vascular tissue pattern formation. The chain is Inactive TPR repeat-containing thioredoxin TTL3 from Arabidopsis thaliana (Mouse-ear cress).